The chain runs to 2515 residues: Nonribosomal peptide synthetase tpzA (2515 aa).

Residues 246 to 648 (ELATRQPGAQ…GRMGTQVKLR (403 aa)) are adenylation 1. The region spanning 794–867 (SEVEHLIHAI…DMATVALKTS (74 aa)) is the Carrier 1 domain. An O-(pantetheine 4'-phosphoryl)serine modification is found at S828. The interval 924 to 1332 (DAYPCSPLQE…IRSVPHITPE (409 aa)) is condensation 1. An adenylation 2 region spans residues 1357–1758 (RKQSQETPSA…GRMNDQIKLR (402 aa)). The 77-residue stretch at 1900 to 1976 (LATTNEERTL…AILSHLTGRK (77 aa)) folds into the Carrier 2 domain. S1937 bears the O-(pantetheine 4'-phosphoryl)serine mark. Residues 2013–2431 (VEDIYPCGPI…LGILPPEEQK (419 aa)) are condensation 2. The 77-residue stretch at 2436–2512 (PSLSAAVVRL…AMARRSLVVS (77 aa)) folds into the Carrier 3 domain. An O-(pantetheine 4'-phosphoryl)serine modification is found at S2473.

Belongs to the NRP synthetase family.

It participates in secondary metabolite biosynthesis. Its function is as follows. Nonribosomal peptide synthetase; part of the gene cluster that mediates the biosynthesis of terreazepine,. The first step of terreazepine biosynthesis is catalyzed by the indoleamine 2,3-dioxygenase tpzB which produces N-formyl-kynurenine through the catabolism of tryptophan. The two-module NRPS tpzA then utilizes anthranilate and kynurenine to assemble terreazepine. The first adenylation domain of tpzA (A1) loads anthranilate onto the T1 domain, while A2 loads kynurenine, generated through spontaneous nonenzymatic deformylation of the tzpB-supplied N-formyl-kynurenine. TpzA produces a 2:1 mixture of S-R enantiomers, which suggests that the A2 domain accepts both D- and L-kynurenine. The peptide bond formation between the tethered amino acids is catalyzed by the first condensation domain (C1) between anthranilate's carbonyl carbon and kynurenine's aliphatic primary amine. The second C domain (C2) catalyzes the final cyclization event between the aromatic amine of kynurenine and the tethered carbonyl carbon, yielding the final terreazepine product. The T3 domain may facilitate the interaction with downstream tailoring enzymes. This chain is Nonribosomal peptide synthetase tpzA, found in Aspergillus terreus (strain NIH 2624 / FGSC A1156).